We begin with the raw amino-acid sequence, 390 residues long: Odorant receptor 85b (390 aa).

Over 1 to 30 (MEKLMKYASFFYTAVGIRPYTNGEESKMNK) the chain is Cytoplasmic. The chain crosses the membrane as a helical span at residues 31–51 (LIFHIVFWSNVINLSFVGLFE). At 52 to 66 (SIYVYSAFMDNKFLE) the chain is on the extracellular side. Residues 67-87 (AVTALSYIGFVTVGMSKMFFI) form a helical membrane-spanning segment. At 88-126 (RWKKTAITELINELKEIYPNGLIREERYNLPMYLGTCSR) the chain is on the cytoplasmic side. The chain crosses the membrane as a helical span at residues 127–147 (ISLIYSLLYSVLIWTFNLFCV). The Extracellular segment spans residues 148–200 (MEYWVYDKWLNIRVVGKQLPYLMYIPWKWQDNWSYYPLLFSQNFAGYTSAAGQ). Asparagine 179 carries N-linked (GlcNAc...) asparagine glycosylation. The helical transmembrane segment at 201-221 (ISTDVLLCAVATQLVMHFDFL) threads the bilayer. Residues 222-260 (SNSMERHELSGDWKKDSRFLVDIVRYHERILRLSDAVND) are Cytoplasmic-facing. The chain crosses the membrane as a helical span at residues 261–281 (IFGIPLLLNFMVSSFVICFVG). Topologically, residues 282–291 (FQMTVGVPPD) are extracellular. Residues 292 to 312 (IVVKLFLFLVSSMSQVYLICH) form a helical membrane-spanning segment. Residues 313 to 360 (YGQLVADASYGFSVATYNQKWYKADVRYKRALVIIIARSQKVTFLKAT) are Cytoplasmic-facing. Residues 361–381 (IFLDITRSTMTDLLQISYKFF) traverse the membrane as a helical segment. The Extracellular portion of the chain corresponds to 382–390 (ALLRTMYTQ).

The protein belongs to the insect chemoreceptor superfamily. Heteromeric odorant receptor channel (TC 1.A.69) family. Or49a subfamily. As to quaternary structure, interacts with Orco. Complexes exist early in the endomembrane system in olfactory sensory neurons (OSNs), coupling these complexes to the conserved ciliary trafficking pathway. Expressed in olfactory sensory neurons in the antenna.

It is found in the cell membrane. Its function is as follows. Odorant receptor which mediates acceptance or avoidance behavior, depending on its substrates. The odorant receptor repertoire encodes a large collection of odor stimuli that vary widely in identity, intensity, and duration. Forms a complex with Orco to form odorant-sensing units, providing sensitive and prolonged odorant signaling and calcium permeability. Involved in the behavioral responses to 2-heptanone, amyl acetate, and butyl acetate. This is Odorant receptor 85b (Or85b) from Drosophila melanogaster (Fruit fly).